A 496-amino-acid polypeptide reads, in one-letter code: Probable cytosol aminopeptidase (496 aa).

2 residues coordinate Mn(2+): Lys266 and Asp271. Lys278 is an active-site residue. Positions 289, 348, and 350 each coordinate Mn(2+). Residue Arg352 is part of the active site.

Belongs to the peptidase M17 family. The cofactor is Mn(2+).

It localises to the cytoplasm. The enzyme catalyses Release of an N-terminal amino acid, Xaa-|-Yaa-, in which Xaa is preferably Leu, but may be other amino acids including Pro although not Arg or Lys, and Yaa may be Pro. Amino acid amides and methyl esters are also readily hydrolyzed, but rates on arylamides are exceedingly low.. It catalyses the reaction Release of an N-terminal amino acid, preferentially leucine, but not glutamic or aspartic acids.. Its function is as follows. Presumably involved in the processing and regular turnover of intracellular proteins. Catalyzes the removal of unsubstituted N-terminal amino acids from various peptides. The sequence is that of Probable cytosol aminopeptidase from Pseudomonas fluorescens (strain SBW25).